The primary structure comprises 586 residues: Ezrin (586 aa).

Residues 2–296 (PKPINVRVTT…NHELYMRRRK (295 aa)) form the FERM domain. Lys60 carries the post-translational modification N6-acetyllysine. The [IL]-x-C-x-x-[DE] motif signature appears at 115–120 (IYCPPE). The residue at position 146 (Tyr146) is a Phosphotyrosine; by PDGFR. The tract at residues 244 to 586 (EIRNISFNDK…KQRIDEFEAL (343 aa)) is interaction with SCYL3. The stretch at 302–462 (VQQMKAQARE…QDDLVKTKEE (161 aa)) forms a coiled coil. The tract at residues 306–341 (KAQAREEKHQKQLERQQLETEKKRRETVEREKEQMM) is disordered. The span at 308–341 (QAREEKHQKQLERQQLETEKKRRETVEREKEQMM) shows a compositional bias: basic and acidic residues. At Tyr354 the chain carries Phosphotyrosine; by PDGFR. Ser366 bears the Phosphoserine mark. Residue Tyr478 is modified to Phosphotyrosine. Residues 485-564 (VQESLQDEGA…NENMRQGRDK (80 aa)) form a disordered region. The span at 507-528 (GIRDDRNEEKRITEAEKNERVQ) shows a compositional bias: basic and acidic residues. Residues 530–539 (QLLTLSSELS) show a composition bias toward polar residues. Ser535 is modified (phosphoserine). The segment covering 540-564 (QARDENKRTHNDIIHNENMRQGRDK) has biased composition (basic and acidic residues). Residue Thr567 is modified to Phosphothreonine; by ROCK2 and PKC/PRKCI.

In terms of assembly, monomer. Homodimer. Interacts with PALS1 and NHERF2. Found in a complex with EZR, PODXL and NHERF2. Interacts with MCC, PLEKHG6, PODXL, SCYL3/PACE1, NHERF1 and TMEM8B. Interacts (when phosphorylated) with FES/FPS. Interacts with dimeric S100P, the interaction may be activating through unmasking of F-actin binding sites. Identified in complexes that contain VIM, EZR, AHNAK, BFSP1, BFSP2, ANK2, PLEC, PRX and spectrin. Detected in a complex composed of at least EZR, AHNAK, PPL and PRX. Interacts with PDPN (via cytoplasmic domain); activates RHOA and promotes epithelial-mesenchymal transition. Interacts with SPN/CD43 cytoplasmic tail, CD44 and ICAM2. Interacts with SLC9A3; interaction targets SLC9A3 to the apical membrane. Interacts with SLC9A1; regulates interactions of SLC9A1 with cytoskeletal and promotes stress fiber formation. Interacts with CLIC5; may work together in a complex which also includes RDX and MYO6 to stabilize linkages between the plasma membrane and subjacent actin cytoskeleton at the base of stereocilia. In terms of processing, phosphorylated by tyrosine-protein kinases. Phosphorylation by ROCK2 suppresses the head-to-tail association of the N-terminal and C-terminal halves resulting in an opened conformation which is capable of actin and membrane-binding. Post-translationally, S-nitrosylation is induced by interferon-gamma and oxidatively-modified low-densitity lipoprotein (LDL(ox)) possibly implicating the iNOS-S100A8/9 transnitrosylase complex. Expressed in cerebral cortex, basal ganglia, hippocampus, hypophysis, and optic nerve. Weakly expressed in brain stem and diencephalon. Stronger expression was detected in gray matter of frontal lobe compared to white matter (at protein level). Component of the microvilli of intestinal epithelial cells. Preferentially expressed in astrocytes of hippocampus, frontal cortex, thalamus, parahippocampal cortex, amygdala, insula, and corpus callosum. Not detected in neurons in most tissues studied.

Its subcellular location is the apical cell membrane. It is found in the cell projection. The protein resides in the microvillus membrane. It localises to the ruffle membrane. The protein localises to the cytoplasm. Its subcellular location is the cell cortex. It is found in the cytoskeleton. The protein resides in the microvillus. With respect to regulation, a head-to-tail association, of the N-terminal and C-terminal halves results in a closed conformation (inactive form) which is incapable of actin or membrane-binding. Probably involved in connections of major cytoskeletal structures to the plasma membrane. In epithelial cells, required for the formation of microvilli and membrane ruffles on the apical pole. Along with PLEKHG6, required for normal macropinocytosis. This chain is Ezrin (EZR), found in Homo sapiens (Human).